The following is a 145-amino-acid chain: Leghemoglobin-2 (145 aa).

The 143-residue stretch at 3–145 folds into the Globin domain; the sequence is AFSDKQEGLV…ELAAAIKKAY (143 aa). A nitrated tyrosine mark is found at Y26 and Y31. S46 is a binding site for heme b. S46 carries the phosphoserine modification. An O2-binding site is contributed by H62. 3 residues coordinate heme b: K65, H93, and K96. Residue Y134 is modified to Nitrated tyrosine.

Belongs to the plant globin family. As to quaternary structure, monomer. Nitrated in effective nodules and particularly in hypoxic conditions; this mechanism may play a protective role in the symbiosis by buffering toxic peroxynitrite NO(2)(-). Nitration level decrease during nodule senescence. In terms of processing, phosphorylation at Ser-46 disrupts the molecular environment of its porphyrin ring oxygen binding pocket, thus leading to a reduced oxygen consumption and to the delivery of oxygen O(2) to symbiosomes. As to expression, root nodules.

It is found in the cytoplasm. The protein localises to the cytosol. Its subcellular location is the nucleus. Functionally, leghemoglobin that reversibly binds oxygen O(2) through a pentacoordinated heme iron. In root nodules, facilitates the diffusion of oxygen to the bacteroids while preventing the bacterial nitrogenase from being inactivated by buffering dioxygen, nitric oxide and carbon monoxide, and promoting the formation of reactive oxygen species (ROS, e.g. H(2)O(2)). This role is essential for symbiotic nitrogen fixation (SNF). The polypeptide is Leghemoglobin-2 (Vigna unguiculata (Cowpea)).